We begin with the raw amino-acid sequence, 310 residues long: Porphobilinogen deaminase (310 aa).

Position 242 is an S-(dipyrrolylmethanemethyl)cysteine (Cys242).

The protein belongs to the HMBS family. As to quaternary structure, monomer. The cofactor is dipyrromethane.

It catalyses the reaction 4 porphobilinogen + H2O = hydroxymethylbilane + 4 NH4(+). The protein operates within porphyrin-containing compound metabolism; protoporphyrin-IX biosynthesis; coproporphyrinogen-III from 5-aminolevulinate: step 2/4. Its function is as follows. Tetrapolymerization of the monopyrrole PBG into the hydroxymethylbilane pre-uroporphyrinogen in several discrete steps. The polypeptide is Porphobilinogen deaminase (Shewanella sp. (strain ANA-3)).